A 546-amino-acid polypeptide reads, in one-letter code: 5'-nucleotidase domain-containing protein 3 (546 aa).

Asp-100 acts as the Nucleophile in catalysis. 2 residues coordinate Mg(2+): Asp-100 and Asp-102. The active-site Proton donor is the Asp-102. 249 to 257 (KDSIRDVHI) contributes to the substrate binding site. Asp-387 serves as a coordination point for Mg(2+).

Belongs to the 5'(3')-deoxyribonucleotidase family. Mg(2+) is required as a cofactor.

The protein is 5'-nucleotidase domain-containing protein 3 (Nt5dc3) of Mus musculus (Mouse).